The primary structure comprises 388 residues: Succinate--CoA ligase [ADP-forming] subunit beta (388 aa).

Positions 9-244 constitute an ATP-grasp domain; the sequence is KQLFAEYGLP…PSQDDAREAH (236 aa). Residues K46, 53–55, E99, T102, and E107 each bind ATP; that span reads GRG. Residues N199 and D213 each contribute to the Mg(2+) site. Substrate is bound by residues N264 and 321 to 323; that span reads GIV.

Belongs to the succinate/malate CoA ligase beta subunit family. In terms of assembly, heterotetramer of two alpha and two beta subunits. Mg(2+) is required as a cofactor.

It carries out the reaction succinate + ATP + CoA = succinyl-CoA + ADP + phosphate. It catalyses the reaction GTP + succinate + CoA = succinyl-CoA + GDP + phosphate. It participates in carbohydrate metabolism; tricarboxylic acid cycle; succinate from succinyl-CoA (ligase route): step 1/1. Its function is as follows. Succinyl-CoA synthetase functions in the citric acid cycle (TCA), coupling the hydrolysis of succinyl-CoA to the synthesis of either ATP or GTP and thus represents the only step of substrate-level phosphorylation in the TCA. The beta subunit provides nucleotide specificity of the enzyme and binds the substrate succinate, while the binding sites for coenzyme A and phosphate are found in the alpha subunit. In Pseudomonas aeruginosa (strain LESB58), this protein is Succinate--CoA ligase [ADP-forming] subunit beta.